The following is an 888-amino-acid chain: Alanine--tRNA ligase (888 aa).

Zn(2+) contacts are provided by His573, His577, Cys676, and His680.

It belongs to the class-II aminoacyl-tRNA synthetase family. The cofactor is Zn(2+).

Its subcellular location is the cytoplasm. The enzyme catalyses tRNA(Ala) + L-alanine + ATP = L-alanyl-tRNA(Ala) + AMP + diphosphate. Functionally, catalyzes the attachment of alanine to tRNA(Ala) in a two-step reaction: alanine is first activated by ATP to form Ala-AMP and then transferred to the acceptor end of tRNA(Ala). Also edits incorrectly charged Ser-tRNA(Ala) and Gly-tRNA(Ala) via its editing domain. The polypeptide is Alanine--tRNA ligase (Corynebacterium glutamicum (strain ATCC 13032 / DSM 20300 / JCM 1318 / BCRC 11384 / CCUG 27702 / LMG 3730 / NBRC 12168 / NCIMB 10025 / NRRL B-2784 / 534)).